A 352-amino-acid polypeptide reads, in one-letter code: Phosphoribosylformylglycinamidine cyclo-ligase (352 aa).

The protein belongs to the AIR synthase family.

The protein resides in the cytoplasm. It carries out the reaction 2-formamido-N(1)-(5-O-phospho-beta-D-ribosyl)acetamidine + ATP = 5-amino-1-(5-phospho-beta-D-ribosyl)imidazole + ADP + phosphate + H(+). Its pathway is purine metabolism; IMP biosynthesis via de novo pathway; 5-amino-1-(5-phospho-D-ribosyl)imidazole from N(2)-formyl-N(1)-(5-phospho-D-ribosyl)glycinamide: step 2/2. This is Phosphoribosylformylglycinamidine cyclo-ligase from Pseudomonas fluorescens (strain Pf0-1).